The sequence spans 476 residues: Aspartyl/glutamyl-tRNA(Asn/Gln) amidotransferase subunit B (476 aa).

Belongs to the GatB/GatE family. GatB subfamily. As to quaternary structure, heterotrimer of A, B and C subunits.

The catalysed reaction is L-glutamyl-tRNA(Gln) + L-glutamine + ATP + H2O = L-glutaminyl-tRNA(Gln) + L-glutamate + ADP + phosphate + H(+). The enzyme catalyses L-aspartyl-tRNA(Asn) + L-glutamine + ATP + H2O = L-asparaginyl-tRNA(Asn) + L-glutamate + ADP + phosphate + 2 H(+). Functionally, allows the formation of correctly charged Asn-tRNA(Asn) or Gln-tRNA(Gln) through the transamidation of misacylated Asp-tRNA(Asn) or Glu-tRNA(Gln) in organisms which lack either or both of asparaginyl-tRNA or glutaminyl-tRNA synthetases. The reaction takes place in the presence of glutamine and ATP through an activated phospho-Asp-tRNA(Asn) or phospho-Glu-tRNA(Gln). This Listeria innocua serovar 6a (strain ATCC BAA-680 / CLIP 11262) protein is Aspartyl/glutamyl-tRNA(Asn/Gln) amidotransferase subunit B.